Consider the following 156-residue polypeptide: Arginine repressor (156 aa).

Belongs to the ArgR family.

Its subcellular location is the cytoplasm. It functions in the pathway amino-acid biosynthesis; L-arginine biosynthesis [regulation]. Functionally, regulates arginine biosynthesis genes. The chain is Arginine repressor from Cronobacter sakazakii (strain ATCC BAA-894) (Enterobacter sakazakii).